A 443-amino-acid chain; its full sequence is Exodeoxyribonuclease 7 large subunit (443 aa).

Belongs to the XseA family. In terms of assembly, heterooligomer composed of large and small subunits.

The protein resides in the cytoplasm. The catalysed reaction is Exonucleolytic cleavage in either 5'- to 3'- or 3'- to 5'-direction to yield nucleoside 5'-phosphates.. Bidirectionally degrades single-stranded DNA into large acid-insoluble oligonucleotides, which are then degraded further into small acid-soluble oligonucleotides. This Legionella pneumophila (strain Paris) protein is Exodeoxyribonuclease 7 large subunit.